The primary structure comprises 408 residues: Putative transporter AmpG 2 (408 aa).

A run of 12 helical transmembrane segments spans residues 11–31 (IFNILFILIISFPGGLIYLLT), 49–69 (IGLFGLVNFIYILKFLWGPLL), 84–104 (YCLVITLINCIVCVYVLTSFN), 110–130 (TPFVLCLIVLAFFSSIYDMLI), 154–174 (FRIGILISGSGALYLSTIISW), 177–197 (VYRTMAILCIPSLLLIIFYPL), 224–244 (WIVIISFMLLYRLQDSFLSIM), 261–281 (IGYKAFGMCAAIFGGVIGGFL), 294–311 (VLIYHALSSLSFIYLYFL), 315–337 (IISLYIAVFCQEFTKGLTMSPFF), 353–373 (IALITSITNVGTILIGSISGY), and 382–402 (YFFIVAGLCFIPAYILILYLP).

This sequence belongs to the major facilitator superfamily.

It localises to the cell inner membrane. This is Putative transporter AmpG 2 (ampG2) from Rickettsia typhi (strain ATCC VR-144 / Wilmington).